A 193-amino-acid chain; its full sequence is dCTP deaminase, dUMP-forming (193 aa).

Residues 101–106 (KSSLGR), Asp119, 127–129 (TLE), Gln148, Tyr162, and Gln174 contribute to the dCTP site. Glu129 serves as the catalytic Proton donor/acceptor. The disordered stretch occupies residues 162–184 (YGSKGTGSHYQGQRGPTPSRSYE). The span at 167–183 (TGSHYQGQRGPTPSRSY) shows a compositional bias: polar residues.

Belongs to the dCTP deaminase family. As to quaternary structure, homotrimer.

It catalyses the reaction dCTP + 2 H2O = dUMP + NH4(+) + diphosphate. It functions in the pathway pyrimidine metabolism; dUMP biosynthesis; dUMP from dCTP: step 1/1. Functionally, bifunctional enzyme that catalyzes both the deamination of dCTP to dUTP and the hydrolysis of dUTP to dUMP without releasing the toxic dUTP intermediate. This Bifidobacterium longum (strain DJO10A) protein is dCTP deaminase, dUMP-forming.